Reading from the N-terminus, the 415-residue chain is MGLTLTEKILSKAAGRQVSPGDVTEITVDLAAFHDLTGHHVVEVMENIGAVKVWDLDRFVIAFDHLAPPPNDRAAEIQVKLRKFAKSINVRNFHDVGDGILHQLLLEKYALPGQVVMAADSHTTTVGAVGAFAQGMGASDMAAILMTGKTWLMIPEPFLIRLINEPAPGVYGKDVALHILSVFKAEGLNGKSVELQVEKPKAFPMDYRATVSNMGVEFGADAAIFIPDEETVSYLSRSRGINVKPITPDPDAKYVDEYTIELNKLEPLVAAPHSVDNVKPVSEVEGIEVDYVFIGSCTNGRLSDLEAAARILKNGKVKARCIVIPASRDLFTKALDAGYVETLTKAGCVVTYGTCGPCLGGHFGVIGPGETAVSTGSRNFKGRMGSPEGKVYLANAATAAATALEGRLTDPRKYL.

Residues cysteine 297, cysteine 355, and cysteine 358 each coordinate [4Fe-4S] cluster.

It belongs to the aconitase/IPM isomerase family. LeuC type 2 subfamily. Heterodimer of LeuC and LeuD. [4Fe-4S] cluster serves as cofactor.

The catalysed reaction is (2R,3S)-3-isopropylmalate = (2S)-2-isopropylmalate. Its pathway is amino-acid biosynthesis; L-leucine biosynthesis; L-leucine from 3-methyl-2-oxobutanoate: step 2/4. Its function is as follows. Catalyzes the isomerization between 2-isopropylmalate and 3-isopropylmalate, via the formation of 2-isopropylmaleate. This Caldivirga maquilingensis (strain ATCC 700844 / DSM 13496 / JCM 10307 / IC-167) protein is 3-isopropylmalate dehydratase large subunit.